The following is a 201-amino-acid chain: Small ribosomal subunit protein uS4c (201 aa).

The interval 15 to 45 is disordered; sequence LGDLPGLSRKAIKRSYPPGEHGQKSRKPSEY. Residues 35–45 are compositionally biased toward basic and acidic residues; it reads HGQKSRKPSEY. One can recognise an S4 RNA-binding domain in the interval 90–153; that stretch reads MRLDNTVFRL…ASRKLVENYL (64 aa).

Belongs to the universal ribosomal protein uS4 family. As to quaternary structure, part of the 30S ribosomal subunit. Contacts protein S5. The interaction surface between S4 and S5 is involved in control of translational fidelity.

The protein localises to the plastid. It is found in the chloroplast. One of the primary rRNA binding proteins, it binds directly to 16S rRNA where it nucleates assembly of the body of the 30S subunit. Functionally, with S5 and S12 plays an important role in translational accuracy. This Pyropia yezoensis (Susabi-nori) protein is Small ribosomal subunit protein uS4c (rps4).